The sequence spans 374 residues: Chaperone protein DnaJ (374 aa).

The 66-residue stretch at 5 to 70 (DFYEILGVGK…QKRDAYDRYG (66 aa)) folds into the J domain. The disordered stretch occupies residues 29–50 (AMKHHPDRNPDSKGAEDKFKEA). The segment covering 35–50 (DRNPDSKGAEDKFKEA) has biased composition (basic and acidic residues). Residues 134–212 (GYDTTIRVPS…CSGAGKIKRN (79 aa)) form a CR-type zinc finger. Cys-147, Cys-150, Cys-164, Cys-167, Cys-186, Cys-189, Cys-200, and Cys-203 together coordinate Zn(2+). CXXCXGXG motif repeat units lie at residues 147–154 (CETCDGSG), 164–171 (CTTCGGHG), 186–193 (CPKCHGSG), and 200–207 (CGTCSGAG).

Belongs to the DnaJ family. In terms of assembly, homodimer. The cofactor is Zn(2+).

The protein localises to the cytoplasm. Its function is as follows. Participates actively in the response to hyperosmotic and heat shock by preventing the aggregation of stress-denatured proteins and by disaggregating proteins, also in an autonomous, DnaK-independent fashion. Unfolded proteins bind initially to DnaJ; upon interaction with the DnaJ-bound protein, DnaK hydrolyzes its bound ATP, resulting in the formation of a stable complex. GrpE releases ADP from DnaK; ATP binding to DnaK triggers the release of the substrate protein, thus completing the reaction cycle. Several rounds of ATP-dependent interactions between DnaJ, DnaK and GrpE are required for fully efficient folding. Also involved, together with DnaK and GrpE, in the DNA replication of plasmids through activation of initiation proteins. This is Chaperone protein DnaJ from Janthinobacterium sp. (strain Marseille) (Minibacterium massiliensis).